Consider the following 177-residue polypeptide: Inner membrane-spanning protein YciB (177 aa).

5 helical membrane passes run 22–42, 50–70, 76–96, 121–141, and 149–169; these read IFIA…IHWI, ISLF…FFHN, WKIT…QFFT, FIWS…AYYF, and FKVF…SIYI.

Belongs to the YciB family.

Its subcellular location is the cell inner membrane. Functionally, plays a role in cell envelope biogenesis, maintenance of cell envelope integrity and membrane homeostasis. In Buchnera aphidicola subsp. Acyrthosiphon pisum (strain APS) (Acyrthosiphon pisum symbiotic bacterium), this protein is Inner membrane-spanning protein YciB.